Here is a 65-residue protein sequence, read N- to C-terminus: MSKLKGPDGRIPDRLPDGRPAVAWERRWTEGTLPLWLVATAGGIAVIFVLGIFFYGSYQGVGAGG.

Residues 35–55 traverse the membrane as a helical segment; sequence LWLVATAGGIAVIFVLGIFFY.

It belongs to the PsbJ family. In terms of assembly, PSII is composed of 1 copy each of membrane proteins PsbA, PsbB, PsbC, PsbD, PsbE, PsbF, PsbH, PsbI, PsbJ, PsbK, PsbL, PsbM, PsbT, PsbX, PsbY, Psb30/Ycf12, peripheral proteins PsbO, CyanoQ (PsbQ), PsbU, PsbV and a large number of cofactors. It forms dimeric complexes.

It localises to the cellular thylakoid membrane. One of the components of the core complex of photosystem II (PSII). PSII is a light-driven water:plastoquinone oxidoreductase that uses light energy to abstract electrons from H(2)O, generating O(2) and a proton gradient subsequently used for ATP formation. It consists of a core antenna complex that captures photons, and an electron transfer chain that converts photonic excitation into a charge separation. This is Photosystem II reaction center protein J from Prochlorococcus marinus (strain MIT 9312).